Reading from the N-terminus, the 142-residue chain is MKLFLISAALVVLGLAAVADAIGCSDPSPFQGRWVIGVDKKECVALVKEKCGNLRDYTTGRWVRGQHVKSNCGSIPKFTAIATFLKPGNKYLGHAAIFESCASDGIWVYDQWNAKPVERRKIRYGNTGKPNYNGDNFYTIEL.

A signal peptide spans 1 to 35 (MKLFLISAALVVLGLAAVADAIGCSDPSPFQGRWV). Active-site residues include C43 and H94.

It belongs to the cell wall amidase Dae2/Tae2-like family. May be post-translationally modified, since the saliva wild-type protein is slightly heavier than the recombinant one. Detected in salivary glands and in the gut (at protein level).

Its subcellular location is the secreted. Its function is as follows. Tick gut and saliva antibacterial peptide that directly antagonizes host skin commensals which enter the ticks during feeding. Acts as a cell wall hydrolase that cleaves the bond between gamma-D-glutamate-meso-diaminopimelate of a peptide stem and D-alanine of another peptide stem in peptidoglycans. In vitro, degrades peptidoglycans from both Gram-negative and Gram-positive bacteria. Is not able to traverse the protective outer membrane of Gram-negative bacteria. Is not able to kill Borrelia burgdorferi, one of the Lyme disease-causing bacteria. The polypeptide is Domesticated amidase effector 2 (Ixodes scapularis (Black-legged tick)).